The sequence spans 172 residues: Shikimate kinase (172 aa).

Residue 11–16 (GTGKTA) coordinates ATP. Mg(2+) is bound at residue T15. Residues D33, R57, and G79 each coordinate substrate. R117 contacts ATP. R136 serves as a coordination point for substrate.

The protein belongs to the shikimate kinase family. Monomer. It depends on Mg(2+) as a cofactor.

The protein localises to the cytoplasm. It catalyses the reaction shikimate + ATP = 3-phosphoshikimate + ADP + H(+). It functions in the pathway metabolic intermediate biosynthesis; chorismate biosynthesis; chorismate from D-erythrose 4-phosphate and phosphoenolpyruvate: step 5/7. In terms of biological role, catalyzes the specific phosphorylation of the 3-hydroxyl group of shikimic acid using ATP as a cosubstrate. This chain is Shikimate kinase, found in Pelotomaculum thermopropionicum (strain DSM 13744 / JCM 10971 / SI).